The chain runs to 1439 residues: ABC transporter G family member 14 (1439 aa).

The segment covering 1–17 (MEENSNKFEQELKEIGQ) has biased composition (basic and acidic residues). A disordered region spans residues 1–21 (MEENSNKFEQELKEIGQDRNQ). Positions 117–370 (FSILNFFKPS…FMSLGFDCEP (254 aa)) constitute an ABC transporter 1 domain. An ABC transmembrane type-2 1 domain is found at 475–700 (LNDKFGLFTK…GSEFDAYRIC (226 aa)). 6 helical membrane passes run 479–499 (FGLF…SSVF), 516–536 (ILSA…MTFI), 564–584 (IPFT…MFGL), 589–609 (GKFF…TALF), 614–634 (YLCP…IFML), and 734–754 (IIVY…MEYI). The ABC transporter 2 domain occupies 805–1049 (FTWQNIRYTV…LTSYFERHGV (245 aa)). 841 to 848 (GSSGAGKT) provides a ligand contact to ATP. One can recognise an ABC transmembrane type-2 2 domain in the interval 1141 to 1366 (YYTYGSFVQS…YNTCQNYTSA (226 aa)). Helical transmembrane passes span 1144–1164 (YGSF…FWNL), 1175–1195 (IFFI…VMPQ), 1217–1237 (FAIS…TIFF), 1256–1276 (FYFW…GQAV), 1283–1303 (MFFA…FSGV), and 1413–1433 (VGII…FVYL).

This sequence belongs to the ABC transporter superfamily. ABCG family. PDR (TC 3.A.1.205) subfamily.

It localises to the membrane. This is ABC transporter G family member 14 (abcG14) from Dictyostelium discoideum (Social amoeba).